A 233-amino-acid chain; its full sequence is MGKHIVAQRRGHGSLVYRSPSHRHLGDIKYPRDGTYKIEDIIQAPGRNTPVLLIRNEKNEKNYMIAFNGAYVNQEIHVGDIDSPAIGDVTYLANIPDGSYVYNIESIPGDGGKFCRAAGTAALVISHGAYVSLKLPSGVNKEFHPRCRATVGFIAGSGARDIPILKAGTHIKYLQSKAKRPYTVRGVAMNAVNHPHGGGNHQHVGRPSTVGRGTPPGRKVGRLSPKRRKKYGR.

The disordered stretch occupies residues H194–R233. Over residues K219 to R233 the composition is skewed to basic residues.

It belongs to the universal ribosomal protein uL2 family. In terms of assembly, part of the 50S ribosomal subunit. Forms a bridge to the 30S subunit in the 70S ribosome.

Functionally, one of the primary rRNA binding proteins. Required for association of the 30S and 50S subunits to form the 70S ribosome, for tRNA binding and peptide bond formation. It has been suggested to have peptidyltransferase activity; this is somewhat controversial. Makes several contacts with the 16S rRNA in the 70S ribosome. This chain is Large ribosomal subunit protein uL2, found in Picrophilus torridus (strain ATCC 700027 / DSM 9790 / JCM 10055 / NBRC 100828 / KAW 2/3).